The chain runs to 371 residues: Chitin deacetylase (371 aa).

The N-terminal stretch at 1–20 (MLCRLFTLFITAALACCVAA) is a signal peptide. Residues 73–112 (PKPEPEPTAVPTMAPEPTTVPPTEPSGTYPPETTPTVEPT) are disordered. Low complexity-rich tracts occupy residues 79–89 (PTAVPTMAPEP) and 102–112 (PPETTPTVEPT). A disulfide bond links C164 and C358. N-linked (GlcNAc...) asparagine glycosylation occurs at N167. A NodB homology domain is found at 168–353 (GTIALTFDDG…EIKKRGLRAV (186 aa)). Residue D175 is the Proton acceptor of the active site. Acetate is bound at residue D175. Co(2+) contacts are provided by D176, H228, and H232. N-linked (GlcNAc...) asparagine glycosylation is present at N239. Residue Y270 coordinates acetate. H327 serves as the catalytic Proton donor.

Belongs to the polysaccharide deacetylase family. The cofactor is Co(2+).

It carries out the reaction [(1-&gt;4)-N-acetyl-beta-D-glucosaminyl](n) + n H2O = chitosan + n acetate. Hydrolyzes the N-acetamido groups of N-acetyl-D-glucosamine residues in chitin to form chitosan and acetate. This Arthroderma benhamiae (strain ATCC MYA-4681 / CBS 112371) (Trichophyton mentagrophytes) protein is Chitin deacetylase.